Consider the following 88-residue polypeptide: Small ribosomal subunit protein bS20 (88 aa).

This sequence belongs to the bacterial ribosomal protein bS20 family.

Functionally, binds directly to 16S ribosomal RNA. The protein is Small ribosomal subunit protein bS20 of Desulforamulus reducens (strain ATCC BAA-1160 / DSM 100696 / MI-1) (Desulfotomaculum reducens).